The following is a 650-amino-acid chain: Kinesin-like protein KIF22-B (650 aa).

One can recognise a Kinesin motor domain in the interval 31–359 (RVRVAVRLRP…LNFAAKSKQI (329 aa)). 116–123 (GPTGAGKT) lines the ATP pocket. Residues 365-416 (SRETTQTVAQPAMKRPREEAEATTSSRQRKKSKTDSTESSPNSSMESTGKRK) form a disordered region. Low complexity predominate over residues 401–411 (TESSPNSSMES). Residues 452 to 498 (KRERMALLKKWEESQMEIERLKEKQKELEQKAMEAEARLEKSNNSDL) adopt a coiled-coil conformation. The short motif at 560 to 563 (GHEN) is the Important for regulated proteolytic degradation element.

This sequence belongs to the TRAFAC class myosin-kinesin ATPase superfamily. Kinesin family. In terms of processing, ubiquitinated, leading to its subsequent proteasomal degradation.

It localises to the nucleus. Its subcellular location is the cytoplasm. It is found in the cytoskeleton. Its function is as follows. Kinesin family member that is involved in spindle formation and the movements of chromosomes during mitosis and meiosis. Binds to microtubules and to DNA. This Xenopus laevis (African clawed frog) protein is Kinesin-like protein KIF22-B (kif22-b).